The primary structure comprises 120 residues: Ribosome-binding factor A (120 aa).

Belongs to the RbfA family. Monomer. Binds 30S ribosomal subunits, but not 50S ribosomal subunits or 70S ribosomes.

It is found in the cytoplasm. One of several proteins that assist in the late maturation steps of the functional core of the 30S ribosomal subunit. Associates with free 30S ribosomal subunits (but not with 30S subunits that are part of 70S ribosomes or polysomes). Required for efficient processing of 16S rRNA. May interact with the 5'-terminal helix region of 16S rRNA. This is Ribosome-binding factor A from Clostridium botulinum (strain 657 / Type Ba4).